Here is a 106-residue protein sequence, read N- to C-terminus: Large ribosomal subunit protein eL30 (106 aa).

Belongs to the eukaryotic ribosomal protein eL30 family. In terms of assembly, component of the large ribosomal subunit. Mature ribosomes consist of a small (40S) and a large (60S) subunit. The 40S subunit contains about 32 different proteins and 1 molecule of RNA (18S). The 60S subunit contains 45 different proteins and 3 molecules of RNA (25S, 5.8S and 5S).

The protein resides in the cytoplasm. Its function is as follows. Component of the ribosome, a large ribonucleoprotein complex responsible for the synthesis of proteins in the cell. The small ribosomal subunit (SSU) binds messenger RNAs (mRNAs) and translates the encoded message by selecting cognate aminoacyl-transfer RNA (tRNA) molecules. The large subunit (LSU) contains the ribosomal catalytic site termed the peptidyl transferase center (PTC), which catalyzes the formation of peptide bonds, thereby polymerizing the amino acids delivered by tRNAs into a polypeptide chain. The nascent polypeptides leave the ribosome through a tunnel in the LSU and interact with protein factors that function in enzymatic processing, targeting, and the membrane insertion of nascent chains at the exit of the ribosomal tunnel. In Candida albicans (strain SC5314 / ATCC MYA-2876) (Yeast), this protein is Large ribosomal subunit protein eL30.